The primary structure comprises 146 residues: MGGTADFVLSITIVLVILIIIAFIWYNFTGWSPFKYSKGNIVTFKTPDESSIAYMRFRNCIFTFTDPKGSLHSIDVTEVLNNMAKGFRDAQNPPSSFTLGGHCQAPLNAFSFVLPGVNDRATVVTADDAKKWENCDATLTGLQRII.

A helical transmembrane segment spans residues 7–27 (FVLSITIVLVILIIIAFIWYN).

The protein belongs to the asfivirus E146L family.

Its subcellular location is the host membrane. The protein localises to the virion. This is an uncharacterized protein from Ornithodoros (relapsing fever ticks).